The primary structure comprises 292 residues: 4-hydroxy-tetrahydrodipicolinate synthase (292 aa).

Thr-45 serves as a coordination point for pyruvate. The Proton donor/acceptor role is filled by Tyr-133. Lys-161 functions as the Schiff-base intermediate with substrate in the catalytic mechanism. Residue Ile-203 participates in pyruvate binding.

Belongs to the DapA family. In terms of assembly, homodimer.

It is found in the cytoplasm. It catalyses the reaction L-aspartate 4-semialdehyde + pyruvate = (2S,4S)-4-hydroxy-2,3,4,5-tetrahydrodipicolinate + H2O + H(+). Its pathway is amino-acid biosynthesis; L-lysine biosynthesis via DAP pathway; (S)-tetrahydrodipicolinate from L-aspartate: step 3/4. In terms of biological role, catalyzes the condensation of (S)-aspartate-beta-semialdehyde [(S)-ASA] and pyruvate to 4-hydroxy-tetrahydrodipicolinate (HTPA). This Stutzerimonas stutzeri (strain A1501) (Pseudomonas stutzeri) protein is 4-hydroxy-tetrahydrodipicolinate synthase.